Reading from the N-terminus, the 749-residue chain is Cytosolic phospholipase A2 (749 aa).

A phospholipid binding region spans residues 1–178 (MSFIDPYQHI…MKKLLGPKNS (178 aa)). Ser2 is modified (phosphoserine). The 117-residue stretch at 6–122 (PYQHIIVEHQ…KVGEKKEVPF (117 aa)) folds into the C2 domain. The Ca(2+) site is built by Asp40, Thr41, Asp43, Asn65, Asp93, Ala94, and Asn95. The PLA2c domain occupies 140–740 (SCPDLRFSMA…SNVEARRFFN (601 aa)). Catalysis depends on Ser228, which acts as the Nucleophile. Residue Thr268 is modified to Phosphothreonine. Residues 409-457 (GSQSRGSTMEEELENITTKHIVSNDSSDSDDESHEPKGTENEDAGSDYQ) are disordered. Ser434, Ser435, and Ser437 each carry phosphoserine. Ser505 carries the phosphoserine; by MAPK modification. Ser515 is modified (phosphoserine). Lys541 is covalently cross-linked (Glycyl lysine isopeptide (Lys-Gly) (interchain with G-Cter in SUMO2)). Residue Asp549 is the Proton acceptor of the active site. Lys606 is covalently cross-linked (Glycyl lysine isopeptide (Lys-Gly) (interchain with G-Cter in SUMO2)). Phosphoserine is present on residues Ser727 and Ser729.

In terms of assembly, interacts with KAT5. In terms of processing, phosphorylated at both Ser-505 and Ser-727 in response to mitogenic stimuli.

Its subcellular location is the cytoplasm. It localises to the golgi apparatus membrane. The protein localises to the nucleus envelope. The enzyme catalyses a 1,2-diacyl-sn-glycero-3-phosphocholine + H2O = a 1-acyl-sn-glycero-3-phosphocholine + a fatty acid + H(+). It catalyses the reaction a 1-O-alkyl-2-acyl-sn-glycero-3-phosphocholine + H2O = a 1-O-alkyl-sn-glycero-3-phosphocholine + a fatty acid + H(+). The catalysed reaction is a 1-acyl-sn-glycero-3-phosphocholine + H2O = sn-glycerol 3-phosphocholine + a fatty acid + H(+). It carries out the reaction 1-hexadecanoyl-2-(5Z,8Z,11Z,14Z-eicosatetraenoyl)-sn-glycero-3-phosphocholine + H2O = 1-hexadecanoyl-sn-glycero-3-phosphocholine + (5Z,8Z,11Z,14Z)-eicosatetraenoate + H(+). The enzyme catalyses 1,2-di-(5Z,8Z,11Z,14Z-eicosatetraenoyl)-sn-glycero-3-phosphocholine + H2O = 1-(5Z,8Z,11Z,14Z-eicosatetraenoyl)-sn-glycero-3-phosphocholine + (5Z,8Z,11Z,14Z)-eicosatetraenoate + H(+). It catalyses the reaction 1-octadecanoyl-2-(5Z,8Z,11Z,14Z-eicosatetraenoyl)-sn-glycero-3-phosphocholine + H2O = 1-octadecanoyl-sn-glycero-3-phosphocholine + (5Z,8Z,11Z,14Z)-eicosatetraenoate + H(+). The catalysed reaction is 1-hexadecanoyl-2-(9Z,12Z-octadecadienoyl)-sn-glycero-3-phosphocholine + H2O = (9Z,12Z)-octadecadienoate + 1-hexadecanoyl-sn-glycero-3-phosphocholine + H(+). It carries out the reaction 1-octadecanoyl-2-(9Z,12Z,15Z-octadecatrienoyl)-sn-glycero-3-phosphocholine + H2O = (9Z,12Z,15Z)-octadecatrienoate + 1-octadecanoyl-sn-glycero-3-phosphocholine + H(+). The enzyme catalyses 1-(5Z,8Z,11Z,14Z-eicosatetraenoyl)-2-hexadecanoyl-sn-glycero-3-phosphocholine + H2O = 1-(5Z,8Z,11Z,14Z-eicosatetraenoyl)-sn-glycero-3-phosphocholine + hexadecanoate + H(+). It catalyses the reaction 1-O-hexadecyl-2-(5Z,8Z,11Z,14Z)-eicosatetraenoyl-sn-glycero-3-phosphocholine + H2O = 1-O-hexadecyl-sn-glycero-3-phosphocholine + (5Z,8Z,11Z,14Z)-eicosatetraenoate + H(+). The catalysed reaction is 1,2-di-(9Z-octadecenoyl)-sn-glycero-3-phospho-(1'-sn-glycerol) + H2O = 1-(9Z-octadecenoyl)-sn-glycero-3-phospho-(1'-sn-glycerol) + (9Z)-octadecenoate + H(+). It carries out the reaction 1-octadecanoyl-2-(5Z,8Z,11Z,14Z-eicosatetraenoyl)-sn-glycero-3-phosphate + H2O = 1-octadecanoyl-sn-glycero-3-phosphate + (5Z,8Z,11Z,14Z)-eicosatetraenoate + H(+). The enzyme catalyses 1-hexadecanoyl-sn-glycero-3-phosphocholine + H2O = sn-glycerol 3-phosphocholine + hexadecanoate + H(+). It catalyses the reaction 2-(prostaglandin E2)-sn-glycero-3-phosphoethanolamine + H2O = sn-glycero-3-phosphoethanolamine + prostaglandin E2 + H(+). The catalysed reaction is 2-[(15S)-hydroxy-(5Z,8Z,11Z,13E)-eicosatetraenoyl]-sn-glycero-3-phosphocholine + H2O = (15S)-hydroxy-(5Z,8Z,11Z,13E)-eicosatetraenoate + sn-glycerol 3-phosphocholine + H(+). It carries out the reaction 2-[(15R)-hydroxy-(5Z,8Z,11Z,13E)-eicosatetraenoyl]-sn-glycero-3-phosphocholine + H2O = (15R)-hydroxy-(5Z,8Z,11Z,13E)-eicosatetraenoate + sn-glycerol 3-phosphocholine + H(+). The enzyme catalyses 2-(prostaglandin E2)-sn-glycero-3-phosphocholine + H2O = prostaglandin E2 + sn-glycerol 3-phosphocholine + H(+). It catalyses the reaction 2-[(11R)-hydroxy-(5Z,8Z,12E,14Z)-eicosatetraenoyl]-sn-glycero-3-phosphocholine + H2O = (11R)-hydroxy-(5Z,8Z,12E,14Z)-eicosatetraenoate + sn-glycerol 3-phosphocholine + H(+). The catalysed reaction is 1-(5Z,8Z,11Z,14Z-eicosatetraenoyl)-2-O-hexadecyl-sn-glycero-3-phosphocholine + H2O = 2-O-hexadecyl-sn-glycero-3-phosphocholine + (5Z,8Z,11Z,14Z)-eicosatetraenoate + H(+). It carries out the reaction 1-octadecanoyl-2-(5Z,8Z,11Z,14Z-eicosatetraenoyl)-sn-glycero-3-phosphocholine + glycerol = 1-(5Z,8Z,11Z,14Z-eicosatetraenoyl)-glycerol + 1-octadecanoyl-sn-glycero-3-phosphocholine. The enzyme catalyses 1-octadecanoyl-2-(9Z,12Z,15Z-octadecatrienoyl)-sn-glycero-3-phosphocholine + glycerol = 1-(9Z,12Z,15Z-octadecatrienoyl)-glycerol + 1-octadecanoyl-sn-glycero-3-phosphocholine. It participates in membrane lipid metabolism; glycerophospholipid metabolism. It functions in the pathway lipid metabolism; arachidonate metabolism. Its pathway is lipid metabolism; prostaglandin biosynthesis. The protein operates within lipid metabolism; leukotriene B4 biosynthesis. Its activity is regulated as follows. Activated by cytosolic calcium, which is necessary for binding to membrane lipids. Activated by phosphorylation in response to mitogenic stimuli. In terms of biological role, has primarily calcium-dependent phospholipase and lysophospholipase activities, with a major role in membrane lipid remodeling and biosynthesis of lipid mediators of the inflammatory response. Plays an important role in embryo implantation and parturition through its ability to trigger prostanoid production. Preferentially hydrolyzes the ester bond of the fatty acyl group attached at sn-2 position of phospholipids (phospholipase A2 activity). Selectively hydrolyzes sn-2 arachidonoyl group from membrane phospholipids, providing the precursor for eicosanoid biosynthesis via the cyclooxygenase pathway. In an alternative pathway of eicosanoid biosynthesis, hydrolyzes sn-2 fatty acyl chain of eicosanoid lysophopholipids to release free bioactive eicosanoids. Hydrolyzes the ester bond of the fatty acyl group attached at sn-1 position of phospholipids (phospholipase A1 activity) only if an ether linkage rather than an ester linkage is present at the sn-2 position. This hydrolysis is not stereospecific. Has calcium-independent phospholipase A2 and lysophospholipase activities in the presence of phosphoinositides. Has O-acyltransferase activity. Catalyzes the transfer of fatty acyl chains from phospholipids to a primary hydroxyl group of glycerol (sn-1 or sn-3), potentially contributing to monoacylglycerol synthesis. This Pongo abelii (Sumatran orangutan) protein is Cytosolic phospholipase A2 (PLA2G4A).